A 359-amino-acid chain; its full sequence is Photosystem II protein D1 1 (359 aa).

Transmembrane regions (helical) follow at residues 29-46, 118-133, and 142-156; these read YVGWFGVLMIPTLLAATT, HFLIGIYAYMGREWEL, and WICIAYSAPVAAASA. Residue His-118 participates in chlorophyll a binding. Residue Tyr-126 coordinates pheophytin a. Residues Asp-170 and Glu-189 each contribute to the [CaMn4O5] cluster site. The helical transmembrane segment at 197 to 218 threads the bilayer; that stretch reads FHMLGVAGVFGGSLFSAMHGSL. His-198 lines the chlorophyll a pocket. A quinone is bound by residues His-215 and 264 to 265; that span reads SF. His-215 is a Fe cation binding site. His-272 is a Fe cation binding site. A helical membrane pass occupies residues 274–288; it reads FLAAWPVVGIWFTAL. [CaMn4O5] cluster-binding residues include His-332, Glu-333, Asp-342, and Ala-344. A propeptide spanning residues 345–359 is cleaved from the precursor; it reads AAESAPVALQAPAIG.

It belongs to the reaction center PufL/M/PsbA/D family. In terms of assembly, PSII is composed of 1 copy each of membrane proteins PsbA, PsbB, PsbC, PsbD, PsbE, PsbF, PsbH, PsbI, PsbJ, PsbK, PsbL, PsbM, PsbT, PsbX, PsbY, PsbZ, Psb30/Ycf12, peripheral proteins PsbO, CyanoQ (PsbQ), PsbU, PsbV and a large number of cofactors. It forms dimeric complexes. The cofactor is The D1/D2 heterodimer binds P680, chlorophylls that are the primary electron donor of PSII, and subsequent electron acceptors. It shares a non-heme iron and each subunit binds pheophytin, quinone, additional chlorophylls, carotenoids and lipids. D1 provides most of the ligands for the Mn4-Ca-O5 cluster of the oxygen-evolving complex (OEC). There is also a Cl(-1) ion associated with D1 and D2, which is required for oxygen evolution. The PSII complex binds additional chlorophylls, carotenoids and specific lipids.. In terms of processing, tyr-161 forms a radical intermediate that is referred to as redox-active TyrZ, YZ or Y-Z. Post-translationally, C-terminally processed by CtpA; processing is essential to allow assembly of the oxygen-evolving complex and thus photosynthetic growth.

The protein localises to the cellular thylakoid membrane. It carries out the reaction 2 a plastoquinone + 4 hnu + 2 H2O = 2 a plastoquinol + O2. Functionally, photosystem II (PSII) is a light-driven water:plastoquinone oxidoreductase that uses light energy to abstract electrons from H(2)O, generating O(2) and a proton gradient subsequently used for ATP formation. It consists of a core antenna complex that captures photons, and an electron transfer chain that converts photonic excitation into a charge separation. The D1/D2 (PsbA/PsbD) reaction center heterodimer binds P680, the primary electron donor of PSII as well as several subsequent electron acceptors. This is Photosystem II protein D1 1 from Synechococcus sp. (strain RCC307).